The following is a 216-amino-acid chain: ATP-dependent Clp protease proteolytic subunit (216 aa).

The active-site Nucleophile is the S109. The active site involves H134.

This sequence belongs to the peptidase S14 family. As to quaternary structure, fourteen ClpP subunits assemble into 2 heptameric rings which stack back to back to give a disk-like structure with a central cavity, resembling the structure of eukaryotic proteasomes.

The protein resides in the cytoplasm. The catalysed reaction is Hydrolysis of proteins to small peptides in the presence of ATP and magnesium. alpha-casein is the usual test substrate. In the absence of ATP, only oligopeptides shorter than five residues are hydrolyzed (such as succinyl-Leu-Tyr-|-NHMec, and Leu-Tyr-Leu-|-Tyr-Trp, in which cleavage of the -Tyr-|-Leu- and -Tyr-|-Trp bonds also occurs).. In terms of biological role, cleaves peptides in various proteins in a process that requires ATP hydrolysis. Has a chymotrypsin-like activity. Plays a major role in the degradation of misfolded proteins. In Rhodospirillum rubrum (strain ATCC 11170 / ATH 1.1.1 / DSM 467 / LMG 4362 / NCIMB 8255 / S1), this protein is ATP-dependent Clp protease proteolytic subunit.